The chain runs to 391 residues: PPE family protein PPE15 (391 aa).

The interval 312 to 367 (LGEATLVGRLSVPAAWSTAAPATTAGATALEGSGWTVAAEEAGPVTGMMPGMASAA) is eukaryotic-like SH3 domain.

This sequence belongs to the mycobacterial PPE family. Forms a heterodimer with PE8. The dimer forms a 1:1:1 heterotrimeric complex with EspG5. PPE15 interacts directly with EspG5. Interacts via the C-terminal region with host Toll-like receptor 4 (TLR4). Interacts, also via the C-terminal region, with two cytosolic subunits of the host NOX complex, p47phox (NCF1) and p67phox (NCF2).

It localises to the secreted. The protein resides in the host mitochondrion. May play a critical role in the homeostasis of triacylglycerol-containing lipid droplets in M.tuberculosis and influence the entry of the pathogen into a dormant state. Is recognized by host TLR4 receptor at the macrophage cell surface, which modulates the host immune response, induces mitochondrial stress and perturbations, and induces macrophage apoptosis leading to pathogen persistence. Also downregulates NOX-mediated reactive oxygen species (ROS) generation in THP1 macrophages, which increases intracellular survival of bacteria. PPE15 interacts with two subunits of the host NADPH oxidase (NOX) complex in the cytosol of macrophages and prevents their migration to the membrane, which inhibits the assembly of the NOX complex at the plasma membrane of THP1 macrophages. This leads to reduced NOX activity and diminished ROS generation. This chain is PPE family protein PPE15 (PPE15), found in Mycobacterium tuberculosis (strain CDC 1551 / Oshkosh).